Consider the following 407-residue polypeptide: 12S rRNA N(4)-cytidine methyltransferase METTL15 (407 aa).

Residues 100-102 (GGH), Asp119, Phe146, Asp169, and Gln176 each bind S-adenosyl-L-methionine. At Ser358 the chain carries Phosphoserine.

It belongs to the methyltransferase superfamily. RsmH family.

The protein resides in the mitochondrion matrix. The enzyme catalyses cytidine(839) in 12S rRNA + S-adenosyl-L-methionine = N(4)-methylcytidine(839) in 12S rRNA + S-adenosyl-L-homocysteine + H(+). Its function is as follows. N4-methylcytidine (m4C) methyltransferase responsible for the methylation of position C839 in mitochondrial 12S rRNA. Involved in the stabilization of 12S rRNA folding, therefore facilitating the assembly of the mitochondrial small ribosomal subunits. This Homo sapiens (Human) protein is 12S rRNA N(4)-cytidine methyltransferase METTL15.